We begin with the raw amino-acid sequence, 133 residues long: Holo-[acyl-carrier-protein] synthase (133 aa).

Mg(2+) contacts are provided by Asp8 and Glu56.

The protein belongs to the P-Pant transferase superfamily. AcpS family. The cofactor is Mg(2+).

It is found in the cytoplasm. It carries out the reaction apo-[ACP] + CoA = holo-[ACP] + adenosine 3',5'-bisphosphate + H(+). Its function is as follows. Transfers the 4'-phosphopantetheine moiety from coenzyme A to a Ser of acyl-carrier-protein. This chain is Holo-[acyl-carrier-protein] synthase, found in Clostridium perfringens (strain ATCC 13124 / DSM 756 / JCM 1290 / NCIMB 6125 / NCTC 8237 / Type A).